Consider the following 431-residue polypeptide: Neuronal pentraxin-2 (431 aa).

A signal peptide spans 1-15 (MLALLAASVALAVAA). 2 N-linked (GlcNAc...) asparagine glycosylation sites follow: Asn-148 and Asn-189. One can recognise a Pentraxin (PTX) domain in the interval 223 to 424 (DAFKVSLPLR…GASKWPVETC (202 aa)). The cysteines at positions 253 and 313 are disulfide-linked. Ca(2+) contacts are provided by Asn-277, Glu-355, Gln-356, Asp-357, and Gln-367. The N-linked (GlcNAc...) asparagine glycan is linked to Asn-393.

As to quaternary structure, homooligomer or heterooligomer (probably pentamer) with neuronal pentraxin receptor (NPTXR). Ca(2+) is required as a cofactor. Brain, pancreas, liver, heart and skeletal muscle. Highest levels are seen in the testis.

It localises to the secreted. Likely to play role in the modification of cellular properties that underlie long-term plasticity. Binds to agar matrix in a calcium-dependent manner. The polypeptide is Neuronal pentraxin-2 (NPTX2) (Homo sapiens (Human)).